The chain runs to 324 residues: Putative S-adenosyl-L-methionine-dependent methyltransferase MMAR_1059 (324 aa).

Residues Asp-138 and 167–168 each bind S-adenosyl-L-methionine; that span reads DL.

The protein belongs to the UPF0677 family.

Exhibits S-adenosyl-L-methionine-dependent methyltransferase activity. This Mycobacterium marinum (strain ATCC BAA-535 / M) protein is Putative S-adenosyl-L-methionine-dependent methyltransferase MMAR_1059.